Consider the following 354-residue polypeptide: S-adenosylmethionine:tRNA ribosyltransferase-isomerase (354 aa).

Belongs to the QueA family. Monomer.

It localises to the cytoplasm. It catalyses the reaction 7-aminomethyl-7-carbaguanosine(34) in tRNA + S-adenosyl-L-methionine = epoxyqueuosine(34) in tRNA + adenine + L-methionine + 2 H(+). Its pathway is tRNA modification; tRNA-queuosine biosynthesis. Functionally, transfers and isomerizes the ribose moiety from AdoMet to the 7-aminomethyl group of 7-deazaguanine (preQ1-tRNA) to give epoxyqueuosine (oQ-tRNA). This chain is S-adenosylmethionine:tRNA ribosyltransferase-isomerase, found in Pseudomonas fluorescens (strain ATCC BAA-477 / NRRL B-23932 / Pf-5).